Consider the following 77-residue polypeptide: U8-lycotoxin-Ls1t (77 aa).

The N-terminal stretch at 1-20 (MKLIIFTGLVLFAIVSLIEA) is a signal peptide. A propeptide spanning residues 21–26 (QAENEK) is cleaved from the precursor.

This sequence belongs to the neurotoxin 19 (CSTX) family. 08 (U8-Lctx) subfamily. Contains 4 disulfide bonds. As to expression, expressed by the venom gland.

It localises to the secreted. The sequence is that of U8-lycotoxin-Ls1t from Lycosa singoriensis (Wolf spider).